Reading from the N-terminus, the 320-residue chain is Aspartate carbamoyltransferase catalytic subunit (320 aa).

Carbamoyl phosphate-binding residues include arginine 68 and threonine 69. Lysine 96 lines the L-aspartate pocket. Carbamoyl phosphate is bound by residues arginine 118, histidine 148, and glutamine 151. L-aspartate contacts are provided by arginine 181 and arginine 236. Carbamoyl phosphate contacts are provided by glycine 277 and proline 278.

The protein belongs to the aspartate/ornithine carbamoyltransferase superfamily. ATCase family. As to quaternary structure, heterododecamer (2C3:3R2) of six catalytic PyrB chains organized as two trimers (C3), and six regulatory PyrI chains organized as three dimers (R2).

The enzyme catalyses carbamoyl phosphate + L-aspartate = N-carbamoyl-L-aspartate + phosphate + H(+). It functions in the pathway pyrimidine metabolism; UMP biosynthesis via de novo pathway; (S)-dihydroorotate from bicarbonate: step 2/3. In terms of biological role, catalyzes the condensation of carbamoyl phosphate and aspartate to form carbamoyl aspartate and inorganic phosphate, the committed step in the de novo pyrimidine nucleotide biosynthesis pathway. The polypeptide is Aspartate carbamoyltransferase catalytic subunit (Variovorax paradoxus (strain S110)).